We begin with the raw amino-acid sequence, 118 residues long: Large ribosomal subunit protein uL18 (118 aa).

It belongs to the universal ribosomal protein uL18 family. In terms of assembly, part of the 50S ribosomal subunit; part of the 5S rRNA/L5/L18/L25 subcomplex. Contacts the 5S and 23S rRNAs.

Functionally, this is one of the proteins that bind and probably mediate the attachment of the 5S RNA into the large ribosomal subunit, where it forms part of the central protuberance. This is Large ribosomal subunit protein uL18 from Campylobacter jejuni subsp. jejuni serotype O:2 (strain ATCC 700819 / NCTC 11168).